Here is a 156-residue protein sequence, read N- to C-terminus: ATP synthase subunit b (156 aa).

A helical membrane pass occupies residues 7–29 (LIAQAISFAILIWFTTKFVWPYL).

The protein belongs to the ATPase B chain family. In terms of assembly, F-type ATPases have 2 components, F(1) - the catalytic core - and F(0) - the membrane proton channel. F(1) has five subunits: alpha(3), beta(3), gamma(1), delta(1), epsilon(1). F(0) has three main subunits: a(1), b(2) and c(10-14). The alpha and beta chains form an alternating ring which encloses part of the gamma chain. F(1) is attached to F(0) by a central stalk formed by the gamma and epsilon chains, while a peripheral stalk is formed by the delta and b chains.

The protein localises to the cell inner membrane. Its function is as follows. F(1)F(0) ATP synthase produces ATP from ADP in the presence of a proton or sodium gradient. F-type ATPases consist of two structural domains, F(1) containing the extramembraneous catalytic core and F(0) containing the membrane proton channel, linked together by a central stalk and a peripheral stalk. During catalysis, ATP synthesis in the catalytic domain of F(1) is coupled via a rotary mechanism of the central stalk subunits to proton translocation. Functionally, component of the F(0) channel, it forms part of the peripheral stalk, linking F(1) to F(0). The polypeptide is ATP synthase subunit b (Methylobacillus flagellatus (strain ATCC 51484 / DSM 6875 / VKM B-1610 / KT)).